The sequence spans 485 residues: Ribosomal protein S6 kinase beta-2 (485 aa).

The segment at 1 to 26 is disordered; sequence MAAVFDLDLETEEGSEGEGEPEFSPA. Residues 7-21 show a composition bias toward acidic residues; it reads LDLETEEGSEGEGEP. At serine 15 the chain carries Phosphoserine. One can recognise a Protein kinase domain in the interval 67-328; the sequence is FELLSVLGKG…AADVQRHPFF (262 aa). ATP-binding positions include 73-81 and lysine 99; that span reads LGKGGYGKV. The active-site Proton acceptor is aspartate 194. An AGC-kinase C-terminal domain is found at 329-399; that stretch reads RHINWDDLLA…VAPSVLDSIK (71 aa). The tract at residues 407–485 is disordered; that stretch reads KLRSPRRLNS…SKKGRGRSGR (79 aa). Phosphoserine is present on serine 417. Threonine 420 carries the post-translational modification Phosphothreonine. Position 423 is a phosphoserine (serine 423). Residues 436-469 are compositionally biased toward pro residues; it reads SPGPPEPMEPSLPPLLPSPPSPPPTSTAPLPIRP. Residues 474–480 carry the Nuclear localization signal motif; it reads KKSKKGR. A compositionally biased stretch (basic residues) spans 474–485; the sequence is KKSKKGRGRSGR. The residue at position 476 (serine 476) is a Phosphoserine; by PKC.

It belongs to the protein kinase superfamily. AGC Ser/Thr protein kinase family. S6 kinase subfamily. Post-translationally, phosphorylated and activated by MTOR. Phosphorylation by PKC within the NLS in response to mitogenic stimuli causes cytoplasmic retention.

The protein resides in the cytoplasm. Its subcellular location is the nucleus. It catalyses the reaction L-seryl-[protein] + ATP = O-phospho-L-seryl-[protein] + ADP + H(+). The catalysed reaction is L-threonyl-[protein] + ATP = O-phospho-L-threonyl-[protein] + ADP + H(+). Functionally, phosphorylates specifically ribosomal protein S6. Seems to act downstream of mTOR signaling in response to growth factors and nutrients to promote cell proliferation, cell growth and cell cycle progression in an alternative pathway regulated by MEAK7. In Mus musculus (Mouse), this protein is Ribosomal protein S6 kinase beta-2 (Rps6kb2).